Reading from the N-terminus, the 447-residue chain is Probable glycine dehydrogenase (decarboxylating) subunit 1 (447 aa).

The protein belongs to the GcvP family. N-terminal subunit subfamily. The glycine cleavage system is composed of four proteins: P, T, L and H. In this organism, the P 'protein' is a heterodimer of two subunits.

It catalyses the reaction N(6)-[(R)-lipoyl]-L-lysyl-[glycine-cleavage complex H protein] + glycine + H(+) = N(6)-[(R)-S(8)-aminomethyldihydrolipoyl]-L-lysyl-[glycine-cleavage complex H protein] + CO2. The glycine cleavage system catalyzes the degradation of glycine. The P protein binds the alpha-amino group of glycine through its pyridoxal phosphate cofactor; CO(2) is released and the remaining methylamine moiety is then transferred to the lipoamide cofactor of the H protein. The sequence is that of Probable glycine dehydrogenase (decarboxylating) subunit 1 from Bacillus cereus (strain ATCC 10987 / NRS 248).